A 142-amino-acid chain; its full sequence is Large ribosomal subunit protein uL11 (142 aa).

This sequence belongs to the universal ribosomal protein uL11 family. Part of the ribosomal stalk of the 50S ribosomal subunit. Interacts with L10 and the large rRNA to form the base of the stalk. L10 forms an elongated spine to which L12 dimers bind in a sequential fashion forming a multimeric L10(L12)X complex. In terms of processing, one or more lysine residues are methylated.

In terms of biological role, forms part of the ribosomal stalk which helps the ribosome interact with GTP-bound translation factors. The chain is Large ribosomal subunit protein uL11 from Aliivibrio fischeri (strain MJ11) (Vibrio fischeri).